A 310-amino-acid chain; its full sequence is MEEVRDCRLEEGLSVEGLVECYRDIHGFMAGHLAEAVEVLREGLEASSVRVLTFTGNLVATGLRGVLAQLIDGGLFNVVFTTAGALDHDIARFMGGKYLKGRFEADDTELHRRGVHRLGNVFIPVESYGPLVERFVRTLAEQAAGVRGEWGVYELLRLAGSLMEGDRDSILAAAARRGVDVFVPGWPDGAFGTSLFMERQRGTSITVDYFRDMARLADIFFPQEGEAAALIVGGGISKHHAIWWSQFRGGLDYAVYVTTAVEYDGSLSGAHPREAVSWGKIKESSRRVVVYGDATITLPVIAYCLLHGCG.

Lys280 (nucleophile) is an active-site residue.

This sequence belongs to the deoxyhypusine synthase family. NAD(+) serves as cofactor.

It catalyses the reaction [eIF5A protein]-L-lysine + spermidine = [eIF5A protein]-deoxyhypusine + propane-1,3-diamine. It functions in the pathway protein modification; eIF5A hypusination. In terms of biological role, catalyzes the NAD-dependent oxidative cleavage of spermidine and the subsequent transfer of the butylamine moiety of spermidine to the epsilon-amino group of a specific lysine residue of the eIF-5A precursor protein to form the intermediate deoxyhypusine residue. The polypeptide is Probable deoxyhypusine synthase (dys) (Aeropyrum pernix (strain ATCC 700893 / DSM 11879 / JCM 9820 / NBRC 100138 / K1)).